A 527-amino-acid polypeptide reads, in one-letter code: Calcium and calcium/calmodulin-dependent serine/threonine-protein kinase (527 aa).

The region spanning Y12–V314 is the Protein kinase domain. An ATP-binding site is contributed by L18–V26. Residues V25–Q51 form a disordered region. Residues Q41–Q51 show a composition bias toward low complexity. K55 contributes to the ATP binding site. Positions R59–E78 are disordered. Residue D179 is the Proton acceptor of the active site. A helical membrane pass occupies residues M239–P255. Residue T279 is modified to Phosphothreonine. Residues A337–W350 form a calmodulin-binding region. The stretch at T358–R379 forms a coiled coil. 3 EF-hand domains span residues S408–S443, K444–D479, and T486–L521. Ca(2+) contacts are provided by D421, N423, D425, T427, E432, D457, D459, S461, C463, E468, D499, N501, D503, K505, and E510.

The protein belongs to the protein kinase superfamily. CAMK Ser/Thr protein kinase family. CaMK subfamily. In terms of processing, autophosphorylation.

It is found in the membrane. The catalysed reaction is L-seryl-[protein] + ATP = O-phospho-L-seryl-[protein] + ADP + H(+). The enzyme catalyses L-threonyl-[protein] + ATP = O-phospho-L-threonyl-[protein] + ADP + H(+). Activated by calcium. Autophosphorylation may play an important role in the regulation of the kinase activity. Its function is as follows. Protein kinase that recognizes the calcium spiking induced by Nod factors and translates this signal to components controlling nodulation and mycorrhizal infection responses. In Pisum sativum (Garden pea), this protein is Calcium and calcium/calmodulin-dependent serine/threonine-protein kinase (SYM9).